A 227-amino-acid polypeptide reads, in one-letter code: Ribosomal RNA small subunit methyltransferase G (227 aa).

Residues G74, L79, 124-125, and R142 contribute to the S-adenosyl-L-methionine site; that span reads AE.

Belongs to the methyltransferase superfamily. RNA methyltransferase RsmG family.

The protein resides in the cytoplasm. Specifically methylates the N7 position of guanine in position 518 of 16S rRNA. This Mycolicibacterium vanbaalenii (strain DSM 7251 / JCM 13017 / BCRC 16820 / KCTC 9966 / NRRL B-24157 / PYR-1) (Mycobacterium vanbaalenii) protein is Ribosomal RNA small subunit methyltransferase G.